Here is a 110-residue protein sequence, read N- to C-terminus: Insulin growth factor-like family member 1 (110 aa).

A signal peptide spans 1–24 (MAPRGCIVAVFAIFCISRLLCSHG). Asparagine 71 carries N-linked (GlcNAc...) asparagine glycosylation.

Belongs to the IGFL family. Homodimer; disulfide-linked. As to expression, detected in ovary and spinal cord.

Its subcellular location is the secreted. In terms of biological role, probable ligand of the IGFLR1 cell membrane receptor. The polypeptide is Insulin growth factor-like family member 1 (IGFL1) (Homo sapiens (Human)).